The primary structure comprises 591 residues: Isocitrate dehydrogenase kinase/phosphatase (591 aa).

ATP-binding positions include 322–328 (APGIRGL) and Lys-343. Asp-378 is a catalytic residue.

This sequence belongs to the AceK family.

It is found in the cytoplasm. It carries out the reaction L-seryl-[isocitrate dehydrogenase] + ATP = O-phospho-L-seryl-[isocitrate dehydrogenase] + ADP + H(+). Functionally, bifunctional enzyme which can phosphorylate or dephosphorylate isocitrate dehydrogenase (IDH) on a specific serine residue. This is a regulatory mechanism which enables bacteria to bypass the Krebs cycle via the glyoxylate shunt in response to the source of carbon. When bacteria are grown on glucose, IDH is fully active and unphosphorylated, but when grown on acetate or ethanol, the activity of IDH declines drastically concomitant with its phosphorylation. The polypeptide is Isocitrate dehydrogenase kinase/phosphatase (Aromatoleum aromaticum (strain DSM 19018 / LMG 30748 / EbN1) (Azoarcus sp. (strain EbN1))).